Consider the following 173-residue polypeptide: Large ribosomal subunit protein uL14mz (173 aa).

Residues 1–61 (MAAAFASRLT…TVLKVVDNSG (61 aa)) constitute a mitochondrion transit peptide.

Belongs to the universal ribosomal protein uL14 family. As to quaternary structure, part of the mitochondrial 50S ribosomal subunit. In terms of tissue distribution, mostly expressed in leaves and inflorescences, including floral organs and meristems, and, to a lower extent, in pistils.

It localises to the mitochondrion. In terms of biological role, binds to 23S rRNA in mitochondrion. This chain is Large ribosomal subunit protein uL14mz (HLP), found in Arabidopsis thaliana (Mouse-ear cress).